The sequence spans 31 residues: Phospholipase A2 homolog P-elapitoxin-Aa1a beta chain (31 aa).

It belongs to the phospholipase A2 family. Group I subfamily. As to quaternary structure, heterotrimer of alpha, beta and gamma chains, each related to PLA2. As to expression, expressed by the venom gland.

The protein localises to the secreted. Heterotrimer: Snake venom phospholipase A2 (PLA2) that has presynaptic neurotoxicity. Inhibits nerve-evoked twitch contractions but not responses to cholinergic agonists acetylcholine and carbachol and to depolarizing agonist KCl. Causes a fade in tetanic contractions. Displays a triphasic mode of action with depression, enhancement and blockade of neurotransmission. Does not display myotoxic activity such as changes in baseline muscle tension or inhibition of directly stimulated muscle twitches. All subunits are necessary for maximum toxicity. Its function is as follows. Monomer: The beta chain has no enzymatic activity and is not toxic by itself. This chain is Phospholipase A2 homolog P-elapitoxin-Aa1a beta chain, found in Acanthophis antarcticus (Common death adder).